A 276-amino-acid polypeptide reads, in one-letter code: 3-methyl-2-oxobutanoate hydroxymethyltransferase (276 aa).

2 residues coordinate Mg(2+): aspartate 49 and aspartate 88. Residues 49–50 (DS), aspartate 88, and lysine 118 each bind 3-methyl-2-oxobutanoate. Residue glutamate 120 coordinates Mg(2+). Residue glutamate 187 is the Proton acceptor of the active site.

The protein belongs to the PanB family. Homodecamer; pentamer of dimers. Requires Mg(2+) as cofactor.

It is found in the cytoplasm. It carries out the reaction 3-methyl-2-oxobutanoate + (6R)-5,10-methylene-5,6,7,8-tetrahydrofolate + H2O = 2-dehydropantoate + (6S)-5,6,7,8-tetrahydrofolate. Its pathway is cofactor biosynthesis; (R)-pantothenate biosynthesis; (R)-pantoate from 3-methyl-2-oxobutanoate: step 1/2. Functionally, catalyzes the reversible reaction in which hydroxymethyl group from 5,10-methylenetetrahydrofolate is transferred onto alpha-ketoisovalerate to form ketopantoate. The polypeptide is 3-methyl-2-oxobutanoate hydroxymethyltransferase (Afipia carboxidovorans (strain ATCC 49405 / DSM 1227 / KCTC 32145 / OM5) (Oligotropha carboxidovorans)).